Here is a 514-residue protein sequence, read N- to C-terminus: Beta-glucosidase 16 (514 aa).

The N-terminal stretch at 1–21 (MRGKFLSLLLLITLACIGVSA) is a signal peptide. Q49 provides a ligand contact to a beta-D-glucoside. Residue N80 is glycosylated (N-linked (GlcNAc...) asparagine). A beta-D-glucoside is bound by residues H153 and 198 to 199 (NE). E199 acts as the Proton donor in catalysis. The cysteines at positions 218 and 226 are disulfide-linked. Y343 serves as a coordination point for a beta-D-glucoside. N-linked (GlcNAc...) asparagine glycosylation is present at N357. Residues E413, W458, 465–466 (EW), and F474 each bind a beta-D-glucoside. E413 functions as the Nucleophile in the catalytic mechanism.

It belongs to the glycosyl hydrolase 1 family. Expressed at low levels in cauline leaves and flowers.

It carries out the reaction Hydrolysis of terminal, non-reducing beta-D-glucosyl residues with release of beta-D-glucose.. In Arabidopsis thaliana (Mouse-ear cress), this protein is Beta-glucosidase 16.